The following is a 158-amino-acid chain: Large ribosomal subunit protein eL24 (158 aa).

A compositionally biased stretch (basic and acidic residues) spans 98-146 (LDASHKKAEAEKAVRELKQKKANDIEKKRADRKLQGKDVKAAKKAETKK). The segment at 98-158 (LDASHKKAEA…QPVGAKGGKK (61 aa)) is disordered.

This sequence belongs to the eukaryotic ribosomal protein eL24 family.

The protein is Large ribosomal subunit protein eL24 (RPL24) of Tetrahymena thermophila (strain SB210).